Consider the following 447-residue polypeptide: Tetratricopeptide repeat protein 23 (447 aa).

4 TPR repeats span residues 45-78, 137-170, 186-219, and 356-389; these read LHLCEEKAKSYSNSHEYKQAVHELVRCVALTRIC, IELFHTMGRALLSLQKFKEAAENLTKAERLSKEL, ARIRLSFAQVYQGQKKSKEALSHYQAALEYVEIS, and AETYRLLGGADLAQGNHSGARKKLKKCLQIQTLL.

Found Associated with the EvC complex composed of EFCAB7, IQCE, EVC2 and EVC.

Its subcellular location is the cell projection. The protein localises to the cilium. Functionally, participates positively in the ciliary Hedgehog (Hh) signaling. This Homo sapiens (Human) protein is Tetratricopeptide repeat protein 23 (TTC23).